Reading from the N-terminus, the 397-residue chain is Na(+)/H(+) antiporter NhaA 3 (397 aa).

11 helical membrane passes run 18-38, 63-83, 98-118, 129-149, 158-178, 181-201, 207-224, 269-289, 306-326, 340-360, and 373-393; these read AGGI…NSPF, LLLW…GLEL, IALP…IYWW, GWAI…ALLG, IFLT…IAFF, SKIS…LFIC, TTLR…VALL, VAFL…FIGM, LFFG…LFGW, GVAV…SLAF, and LGIV…LRSA.

Belongs to the NhaA Na(+)/H(+) (TC 2.A.33) antiporter family.

It is found in the cell inner membrane. The catalysed reaction is Na(+)(in) + 2 H(+)(out) = Na(+)(out) + 2 H(+)(in). Its function is as follows. Na(+)/H(+) antiporter that extrudes sodium in exchange for external protons. This is Na(+)/H(+) antiporter NhaA 3 from Saccharophagus degradans (strain 2-40 / ATCC 43961 / DSM 17024).